Consider the following 389-residue polypeptide: Inactive serine/threonine-protein kinase ZRK12 (389 aa).

Residues 41-342 (SADEIRKATN…ETQFDSHQDI (302 aa)) enclose the Protein kinase domain. Residues 47-55 (KATNNFGVS) and Lys-84 contribute to the ATP site. Tyr-129 bears the Phosphotyrosine mark. Thr-214 is modified (phosphothreonine). Position 222 is a phosphotyrosine (Tyr-222).

It belongs to the protein kinase superfamily. Ser/Thr protein kinase family.

In terms of biological role, together with RPP13L4/ZAR1, involved in the regulation of the ambient temperature-sensitive intersection of growth and immune response in the absence of pathogens. This Arabidopsis thaliana (Mouse-ear cress) protein is Inactive serine/threonine-protein kinase ZRK12.